The following is a 347-amino-acid chain: uncharacterized protein (347 aa).

Zn(2+)-binding residues include Cys-39, His-65, Cys-95, Cys-98, Cys-101, Cys-109, and Glu-152.

This sequence belongs to the zinc-containing alcohol dehydrogenase family. Zn(2+) serves as cofactor.

This is an uncharacterized protein from Escherichia coli (strain K12).